The chain runs to 345 residues: Protein SHI RELATED SEQUENCE 7 (345 aa).

Residues 7–28 are disordered; the sequence is LGGRDHNKQDHHQEKDHNEDKS. Residues 9 to 28 are compositionally biased toward basic and acidic residues; the sequence is GRDHNKQDHHQEKDHNEDKS. Cysteine 119, cysteine 122, cysteine 130, cysteine 135, cysteine 139, and cysteine 146 together coordinate Zn(2+). The zn(2)-C6 fungal-type; degenerate DNA-binding region spans 119–146; sequence CQDCGNQAKKDCPHMRCRTCCKSRGFDC. Residues 168–200 are disordered; sequence AVLPAKRIRDANSRGGGDDDDDDKEDEKNDSCG. The Required for homo- and heterodimerization signature appears at 256–259; it reads IGGH.

This sequence belongs to the SHI protein family. In terms of tissue distribution, mainly expressed in the filaments of flowers, the shoot apex regions and pollen. Also present in leaves.

Its subcellular location is the nucleus. Transcription activator that binds DNA on 5'-ACTCTAC-3' and promotes auxin homeostasis-regulating gene expression (e.g. YUC genes), as well as genes affecting stamen development, cell expansion and timing of flowering. Synergistically with other SHI-related proteins, regulates gynoecium, stamen and leaf development in a dose-dependent manner, controlling apical-basal patterning. Promotes style and stigma formation, and influences vascular development during gynoecium development. May also have a role in the formation and/or maintenance of the shoot apical meristem (SAM). Regulates anther dehiscence and floral development. The protein is Protein SHI RELATED SEQUENCE 7 (SRS7) of Arabidopsis thaliana (Mouse-ear cress).